A 132-amino-acid chain; its full sequence is Small ribosomal subunit protein uS8 (132 aa).

Belongs to the universal ribosomal protein uS8 family. As to quaternary structure, part of the 30S ribosomal subunit. Contacts proteins S5 and S12.

In terms of biological role, one of the primary rRNA binding proteins, it binds directly to 16S rRNA central domain where it helps coordinate assembly of the platform of the 30S subunit. In Pediococcus pentosaceus (strain ATCC 25745 / CCUG 21536 / LMG 10740 / 183-1w), this protein is Small ribosomal subunit protein uS8.